Reading from the N-terminus, the 668-residue chain is SHC SH2 domain-binding protein 1 (668 aa).

N-acetylalanine is present on Ala-2. Residues Ser-31, Ser-44, and Ser-273 each carry the phosphoserine modification. PbH1 repeat units lie at residues 428 to 451 (GMDV…LIIH), 452 to 473 (HGKT…TVRT), 474 to 496 (SAEL…EIYP), 497 to 518 (GSKC…LIKD), and 526 to 548 (IPKI…VLVK). At Ser-630 the chain carries Phosphoserine.

Interacts directly with isoform p52shc of SHC1 via its SH2 domain. Interacts with TRIM71; leading to enhanced SHCBP1 protein stability. Interacts with both members of the centralspindlin complex, KIF23 and RACGAP1. In terms of tissue distribution, expressed in spleen, lung and heart with higher expression in testis. No expression in brain, liver and skeletal muscle. Elevated expression in actively cycling cells.

It localises to the midbody. It is found in the cytoplasm. The protein localises to the cytoskeleton. The protein resides in the spindle. Its function is as follows. May play a role in signaling pathways governing cellular proliferation, cell growth and differentiation. May be a component of a novel signaling pathway downstream of Shc. Acts as a positive regulator of FGF signaling in neural progenitor cells. The protein is SHC SH2 domain-binding protein 1 (Shcbp1) of Mus musculus (Mouse).